We begin with the raw amino-acid sequence, 328 residues long: Beta-ketoacyl-[acyl-carrier-protein] synthase III (328 aa).

Residues Cys122 and His255 contribute to the active site. Positions Gln256–Arg260 are ACP-binding. Residue Asn285 is part of the active site.

This sequence belongs to the thiolase-like superfamily. FabH family. In terms of assembly, homodimer.

Its subcellular location is the cytoplasm. It catalyses the reaction malonyl-[ACP] + acetyl-CoA + H(+) = 3-oxobutanoyl-[ACP] + CO2 + CoA. Its pathway is lipid metabolism; fatty acid biosynthesis. Its function is as follows. Catalyzes the condensation reaction of fatty acid synthesis by the addition to an acyl acceptor of two carbons from malonyl-ACP. Catalyzes the first condensation reaction which initiates fatty acid synthesis and may therefore play a role in governing the total rate of fatty acid production. Possesses both acetoacetyl-ACP synthase and acetyl transacylase activities. Its substrate specificity determines the biosynthesis of branched-chain and/or straight-chain of fatty acids. The sequence is that of Beta-ketoacyl-[acyl-carrier-protein] synthase III from Bordetella petrii (strain ATCC BAA-461 / DSM 12804 / CCUG 43448).